Consider the following 838-residue polypeptide: Leucine--tRNA ligase (838 aa).

The short motif at 36–46 is the 'HIGH' region element; the sequence is PYPSGKIHMGH. The 'KMSKS' region signature appears at 611–615; it reads KMSKS. Residue K614 coordinates ATP.

It belongs to the class-I aminoacyl-tRNA synthetase family.

It is found in the cytoplasm. The catalysed reaction is tRNA(Leu) + L-leucine + ATP = L-leucyl-tRNA(Leu) + AMP + diphosphate. The protein is Leucine--tRNA ligase of Wolbachia sp. subsp. Drosophila simulans (strain wRi).